We begin with the raw amino-acid sequence, 500 residues long: Perfringolysin O (500 aa).

A signal peptide spans 1–28 (MIRFKKTKLIASIAMALCLFSQPVISFS). 4 beta stranded membrane-spanning segments follow: residues 189–202 (KSQISSALNVNAKV), 209–218 (VDFNAVANNE), 287–296 (SKDVQAAFKA), and 304–316 (KNSQQYKDIYENS). The Conserved undecapeptide motif lies at 458 to 468 (ECTGLAWEWWR). The Cholesterol binding signature appears at 490–491 (TL).

This sequence belongs to the cholesterol-dependent cytolysin family. In terms of assembly, modeling based on cryo-EM shows a homooligomeric pore complex containing 38-44 subunits; when inserted in the host membrane.

The protein localises to the secreted. The protein resides in the host cell membrane. Functionally, a cholesterol-dependent toxin that causes cytolysis by forming pores in cholesterol-containing host membranes. After binding to target membranes, the protein assembles into a pre-pore complex. A major conformational change leads to insertion in the host membrane and formation of an oligomeric pore complex. Cholesterol is required for binding to host cell membranes, membrane insertion and pore formation; cholesterol binding is mediated by a Thr-Leu pair in the C-terminus. Can be reversibly inactivated by oxidation. In Clostridium perfringens (strain 13 / Type A), this protein is Perfringolysin O (pfo).